The following is a 374-amino-acid chain: Isocitrate dehydrogenase [NAD] catalytic subunit 5, mitochondrial (374 aa).

A mitochondrion-targeting transit peptide spans 1 to 44; it reads MTMAANLARRLIGNRSTQILGAVNSSSGAASSVARAFCSSTTPI. Substrate contacts are provided by Arg127, Arg137, Arg158, and Asp245. Mg(2+) is bound by residues Asp245, Asp269, and Asp273.

The protein belongs to the isocitrate and isopropylmalate dehydrogenases family. As to quaternary structure, heterooligomer of catalytic and regulatory subunits. It depends on Mg(2+) as a cofactor. The cofactor is Mn(2+). In terms of tissue distribution, ubiquitous.

The protein resides in the mitochondrion. It carries out the reaction D-threo-isocitrate + NAD(+) = 2-oxoglutarate + CO2 + NADH. In terms of biological role, performs an essential role in the oxidative function of the citric acid cycle. The polypeptide is Isocitrate dehydrogenase [NAD] catalytic subunit 5, mitochondrial (IDH5) (Arabidopsis thaliana (Mouse-ear cress)).